The sequence spans 209 residues: Vacuolar protein sorting-associated protein 28 homolog (209 aa).

The VPS28 N-terminal domain occupies 1 to 105 (MSQNSNLMRE…REGRPITVKD (105 aa)). Residues 109-205 (NVLKHIASIV…AYQSFQKALN (97 aa)) enclose the VPS28 C-terminal domain.

This sequence belongs to the VPS28 family. Component of the ESCRT-I complex (endosomal sorting complex required for transport I).

The protein resides in the endosome. Component of the ESCRT-I complex, a regulator of vesicular trafficking process. This chain is Vacuolar protein sorting-associated protein 28 homolog, found in Caenorhabditis briggsae.